We begin with the raw amino-acid sequence, 258 residues long: Phosphate import ATP-binding protein PstB (258 aa).

An ABC transporter domain is found at 12–253; the sequence is LEVKNLNFYY…PARKETEDYI (242 aa). 44–51 contacts ATP; the sequence is GPSGCGKS.

Belongs to the ABC transporter superfamily. Phosphate importer (TC 3.A.1.7) family. The complex is composed of two ATP-binding proteins (PstB), two transmembrane proteins (PstC and PstA) and a solute-binding protein (PstS).

Its subcellular location is the cell inner membrane. It carries out the reaction phosphate(out) + ATP + H2O = ADP + 2 phosphate(in) + H(+). Part of the ABC transporter complex PstSACB involved in phosphate import. Responsible for energy coupling to the transport system. The protein is Phosphate import ATP-binding protein PstB of Bordetella parapertussis (strain 12822 / ATCC BAA-587 / NCTC 13253).